Here is a 183-residue protein sequence, read N- to C-terminus: Caltractin ICL1c (183 aa).

Residues 1 to 30 (MARRGQQPPPQQQQAPPTQKNQAGKFNPAE) form a disordered region. 4 consecutive EF-hand domains span residues 39–74 (EEVL…LGFE), 75–110 (AKNQ…RISE), 112–147 (DSKA…LGET), and 148–183 (MDDS…KTFA). Ca(2+) is bound by residues Asp52, Asp54, Thr56, Ser58, Glu63, Asp88, Asp90, Ser92, Gln94, and Glu99.

The protein belongs to the centrin family. In terms of assembly, monomer.

It localises to the cytoplasm. Its subcellular location is the cytoskeleton. Functionally, plays a fundamental role in microtubule organizing center structure and function. Component of the infraciliary lattice (ICL) and the ciliary basal bodies. The polypeptide is Caltractin ICL1c (Icl1c) (Paramecium tetraurelia).